A 224-amino-acid polypeptide reads, in one-letter code: MELGLAEPTALSHCLRPRWQSAWWPTLAVLALLSCVTEASLDPMSRSPAARDGPSPVLAPPTDHLPGGHTAHLCSERTLRPPPQSPQPAPPPPGPALQSPPAALRGARAARAGTRSSRARTTDARGCRLRSQLVPVSALGLGHSSDELIRFRFCSGSCRRARSQHDLSLASLLGAGALRSPPGSRPISQPCCRPTRYEAVSFMDVNSTWRTVDHLSATACGCLG.

The signal sequence occupies residues 1 to 39; that stretch reads MELGLAEPTALSHCLRPRWQSAWWPTLAVLALLSCVTEA. A propeptide spanning residues 40 to 111 is cleaved from the precursor; sequence SLDPMSRSPA…AALRGARAAR (72 aa). The segment at 43-124 is disordered; the sequence is PMSRSPAARD…RSSRARTTDA (82 aa). Residues 80–95 are compositionally biased toward pro residues; sequence RPPPQSPQPAPPPPGP. Residues 96 to 116 show a composition bias toward low complexity; the sequence is ALQSPPAALRGARAARAGTRS. 3 disulfide bridges follow: cysteine 127-cysteine 192, cysteine 154-cysteine 220, and cysteine 158-cysteine 222. An N-linked (GlcNAc...) asparagine glycan is attached at asparagine 206.

This sequence belongs to the TGF-beta family. GDNF subfamily. As to quaternary structure, homodimer; disulfide-linked. Interacts with GFRA3 coreceptor and RET: forms a 2:2:2 ternary complex composed of ARTN ligand, GFRA3 and RET receptor.

The protein resides in the secreted. In terms of biological role, growth factor that supports the survival of sensory and sympathetic peripheral neurons in culture and also supports the survival of dopaminergic neurons of the ventral mid-brain. Acts by binding to its coreceptor, GFRA3, leading to autophosphorylation and activation of the RET receptor. Strong attractant of gut hematopoietic cells thus promoting the formation Peyer's patch-like structures, a major component of the gut-associated lymphoid tissue. In Mus musculus (Mouse), this protein is Artemin.